A 169-amino-acid polypeptide reads, in one-letter code: Crossover junction endodeoxyribonuclease RuvC (169 aa).

Catalysis depends on residues Asp-12, Glu-72, and Asp-144. Mg(2+) is bound by residues Asp-12, Glu-72, and Asp-144.

This sequence belongs to the RuvC family. Homodimer which binds Holliday junction (HJ) DNA. The HJ becomes 2-fold symmetrical on binding to RuvC with unstacked arms; it has a different conformation from HJ DNA in complex with RuvA. In the full resolvosome a probable DNA-RuvA(4)-RuvB(12)-RuvC(2) complex forms which resolves the HJ. The cofactor is Mg(2+).

The protein localises to the cytoplasm. It catalyses the reaction Endonucleolytic cleavage at a junction such as a reciprocal single-stranded crossover between two homologous DNA duplexes (Holliday junction).. Functionally, the RuvA-RuvB-RuvC complex processes Holliday junction (HJ) DNA during genetic recombination and DNA repair. Endonuclease that resolves HJ intermediates. Cleaves cruciform DNA by making single-stranded nicks across the HJ at symmetrical positions within the homologous arms, yielding a 5'-phosphate and a 3'-hydroxyl group; requires a central core of homology in the junction. The consensus cleavage sequence is 5'-(A/T)TT(C/G)-3'. Cleavage occurs on the 3'-side of the TT dinucleotide at the point of strand exchange. HJ branch migration catalyzed by RuvA-RuvB allows RuvC to scan DNA until it finds its consensus sequence, where it cleaves and resolves the cruciform DNA. The protein is Crossover junction endodeoxyribonuclease RuvC of Xanthobacter autotrophicus (strain ATCC BAA-1158 / Py2).